The chain runs to 377 residues: Signal peptide peptidase (377 aa).

Positions 1-27 (MDSALSDPHNGSAEAGGPTNSTTRPPS) are disordered. Over 1–31 (MDSALSDPHNGSAEAGGPTNSTTRPPSTPEG) the chain is Lumenal. 2 N-linked (GlcNAc...) asparagine glycosylation sites follow: Asn10 and Asn20. Residues 32 to 52 (IALAYGSLLLMALLPIFFGAL) form a helical membrane-spanning segment. The Cytoplasmic segment spans residues 53-77 (RSVRCARGKNASDMPETITSRDAAR). Residues 78 to 98 (FPIIASCTLLGLYLFFKIFSQ) traverse the membrane as a helical segment. Residues 99–100 (EY) lie on the Lumenal side of the membrane. The helical transmembrane segment at 101–121 (INLLLSMYFFVLGILALSHTI) threads the bilayer. Residues 122–157 (SPFMNKFFPASFPNRQYQLLFTQGSGENKEEIINYE) lie on the Cytoplasmic side of the membrane. A helical membrane pass occupies residues 158 to 178 (FDTKDLVCLGLSSIVGVWYLL). Residues 179 to 181 (RKH) are Lumenal-facing. The chain crosses the membrane as a helical span at residues 182-202 (WIANNLFGLAFSLNGVELLHL). The Cytoplasmic segment spans residues 203–209 (NNVSTGC). Residues 210 to 230 (ILLGGLFIYDVFWVFGTNVMV) traverse the membrane as a helical segment. Asp219 is a catalytic residue. Topologically, residues 231–256 (TVAKSFEAPIKLVFPQDLLEKGLEAN) are lumenal. A helical membrane pass occupies residues 257-277 (NFAMLGLGDVVIPGIFIALLL). Asp265 is a catalytic residue. The Cytoplasmic segment spans residues 278 to 290 (RFDISLKKNTHTY). A helical membrane pass occupies residues 291 to 311 (FYTSFAAYIFGLGLTIFIMHI). Residues 312-314 (FKH) are Lumenal-facing. A helical transmembrane segment spans residues 315–335 (AQPALLYLVPACIGFPVLVAL). Residues 317–319 (PAL) carry the PAL motif. Residues 336–377 (AKGEVTEMFSYEESNPKDPAAVTESKEGTEASASKGLEKKEK) are Cytoplasmic-facing. Residues 345–377 (SYEESNPKDPAAVTESKEGTEASASKGLEKKEK) are disordered. Ser367 bears the Phosphoserine mark.

This sequence belongs to the peptidase A22B family. Monomer. Homodimer. Interacts with RNF139. Interacts with DERL1 and XBP1 isoform 1. In terms of processing, N-glycosylated. In terms of tissue distribution, widely expressed with highest levels in kidney, liver, placenta, lung, leukocytes and small intestine and reduced expression in heart and skeletal muscle. Expressed abundantly in the CNS with highest levels in thalamus and medulla.

The protein resides in the endoplasmic reticulum membrane. It localises to the membrane. Its subcellular location is the cell membrane. Catalyzes intramembrane proteolysis of signal peptides that have been removed from precursors of secretory and membrane proteins, resulting in the release of the fragment from the ER membrane into the cytoplasm. Required to generate lymphocyte cell surface (HLA-E) epitopes derived from MHC class I signal peptides. May be necessary for the removal of the signal peptide that remains attached to the hepatitis C virus core protein after the initial proteolytic processing of the polyprotein. Involved in the intramembrane cleavage of the integral membrane protein PSEN1. Cleaves the integral membrane protein XBP1 isoform 1 in a DERL1/RNF139-dependent manner. May play a role in graft rejection. This chain is Signal peptide peptidase, found in Homo sapiens (Human).